Reading from the N-terminus, the 181-residue chain is Mitochondrial inner membrane protein Mpv17 (181 aa).

Helical transmembrane passes span 20–38 (VIVS…QYLT), 48–70 (TARF…FRVL), 91–113 (FMFS…GFSF), and 140–162 (LINF…AFFW).

Belongs to the peroxisomal membrane protein PXMP2/4 family.

The protein localises to the mitochondrion inner membrane. In terms of biological role, involved in mitochondria homeostasis. The chain is Mitochondrial inner membrane protein Mpv17 from Caenorhabditis briggsae.